The primary structure comprises 246 residues: DNA repair protein RecO (246 aa).

It belongs to the RecO family.

In terms of biological role, involved in DNA repair and RecF pathway recombination. This Alkaliphilus metalliredigens (strain QYMF) protein is DNA repair protein RecO.